We begin with the raw amino-acid sequence, 169 residues long: Disulfide bond formation protein B (169 aa).

Topologically, residues methionine 1–serine 13 are cytoplasmic. A helical membrane pass occupies residues tryptophan 14–threonine 30. At phenylalanine 31 to valine 48 the chain is on the periplasmic side. A disulfide bond links cysteine 40 and cysteine 43. A helical membrane pass occupies residues alanine 49–proline 64. Residues asparagine 65 to tryptophan 71 lie on the Cytoplasmic side of the membrane. Residues cysteine 72–leucine 89 traverse the membrane as a helical segment. Over glutamate 90–glutamine 144 the chain is Periplasmic. Residues cysteine 104 and cysteine 130 are joined by a disulfide bond. A helical transmembrane segment spans residues tryptophan 145–alanine 163. The Cytoplasmic segment spans residues glutamine 164 to lysine 169.

The protein belongs to the DsbB family.

It is found in the cell inner membrane. Its function is as follows. Required for disulfide bond formation in some periplasmic proteins. Acts by oxidizing the DsbA protein. This is Disulfide bond formation protein B from Aliivibrio fischeri (strain ATCC 700601 / ES114) (Vibrio fischeri).